The following is a 162-amino-acid chain: Zinc finger protein ZAT12 (162 aa).

2 C2H2-type zinc fingers span residues 39 to 61 and 82 to 104; these read FTCKTCLKQFHSFQALGGHRASH and HPCPICGVEFPMGQALGGHMRRH.

As to expression, expressed in roots, stems and flowers.

The protein localises to the nucleus. Its function is as follows. Transcriptional repressor involved in light acclimation, cold and oxidative stress responses. May regulate a collection of transcripts involved in response to high-light, cold and oxidative stress. The sequence is that of Zinc finger protein ZAT12 (ZAT12) from Arabidopsis thaliana (Mouse-ear cress).